A 360-amino-acid polypeptide reads, in one-letter code: 3-dehydroquinate synthase (360 aa).

Residues 105–109, 129–130, Lys142, Lys151, and 169–172 contribute to the NAD(+) site; these read GVVGD, TT, and TLKT. The Zn(2+) site is built by Glu184, His247, and His263.

It belongs to the sugar phosphate cyclases superfamily. Dehydroquinate synthase family. The cofactor is Co(2+). Zn(2+) is required as a cofactor. Requires NAD(+) as cofactor.

Its subcellular location is the cytoplasm. It catalyses the reaction 7-phospho-2-dehydro-3-deoxy-D-arabino-heptonate = 3-dehydroquinate + phosphate. The protein operates within metabolic intermediate biosynthesis; chorismate biosynthesis; chorismate from D-erythrose 4-phosphate and phosphoenolpyruvate: step 2/7. Catalyzes the conversion of 3-deoxy-D-arabino-heptulosonate 7-phosphate (DAHP) to dehydroquinate (DHQ). This is 3-dehydroquinate synthase from Acetivibrio thermocellus (strain ATCC 27405 / DSM 1237 / JCM 9322 / NBRC 103400 / NCIMB 10682 / NRRL B-4536 / VPI 7372) (Clostridium thermocellum).